A 72-amino-acid polypeptide reads, in one-letter code: UPF0270 protein YheU (72 aa).

The protein belongs to the UPF0270 family.

The sequence is that of UPF0270 protein YheU from Salmonella agona (strain SL483).